Here is a 256-residue protein sequence, read N- to C-terminus: Thiazole synthase (256 aa).

Residue lysine 98 is the Schiff-base intermediate with DXP of the active site. 1-deoxy-D-xylulose 5-phosphate-binding positions include glycine 159, 185-186, and 207-208; these read AG and NT.

Belongs to the ThiG family. As to quaternary structure, homotetramer. Forms heterodimers with either ThiH or ThiS.

Its subcellular location is the cytoplasm. It carries out the reaction [ThiS sulfur-carrier protein]-C-terminal-Gly-aminoethanethioate + 2-iminoacetate + 1-deoxy-D-xylulose 5-phosphate = [ThiS sulfur-carrier protein]-C-terminal Gly-Gly + 2-[(2R,5Z)-2-carboxy-4-methylthiazol-5(2H)-ylidene]ethyl phosphate + 2 H2O + H(+). It participates in cofactor biosynthesis; thiamine diphosphate biosynthesis. Its function is as follows. Catalyzes the rearrangement of 1-deoxy-D-xylulose 5-phosphate (DXP) to produce the thiazole phosphate moiety of thiamine. Sulfur is provided by the thiocarboxylate moiety of the carrier protein ThiS. In vitro, sulfur can be provided by H(2)S. This Aliivibrio fischeri (strain MJ11) (Vibrio fischeri) protein is Thiazole synthase.